The primary structure comprises 962 residues: Protease 3 (962 aa).

Positions 1 to 23 are cleaved as a signal peptide; the sequence is MPRSTWFKALLLLVALWAPLSQA. Histidine 88 provides a ligand contact to Zn(2+). Catalysis depends on glutamate 91, which acts as the Proton acceptor. Zn(2+) contacts are provided by histidine 92 and glutamate 169.

Belongs to the peptidase M16 family. Monomer. Zn(2+) is required as a cofactor.

It is found in the periplasm. The catalysed reaction is Preferential cleavage of 16-Tyr-|-Leu-17 and 25-Phe-|-Tyr-26 bonds of oxidized insulin B chain. Also acts on other substrates of Mw less than 7 kDa such as insulin and glucagon.. Endopeptidase that degrades small peptides of less than 7 kDa, such as glucagon and insulin. This is Protease 3 (ptrA) from Escherichia coli O157:H7.